Reading from the N-terminus, the 347-residue chain is MSVMFDPDTAIYPFPPKPTPLSIDEKAYYREKIKRLLKERNAVMVAHYYTDPEIQQLAEETGGCISDSLEMARFGAKHPASTLLVAGVRFMGETAKILSPEKTILMPTLQAECSLDLGCPVEEFNAFCDAHPDRTVVVYANTSAAVKVRADWVVTSSIAVELIDHLDSLGEKIIWAPDKHLGRYVQKQTGGDILCWQGACIVHDEFKTQALTRLQEEYPDAAILVHPESPQAIVDMADAVGSTSQLIAAAKTLPHQRLIVATDRGIFYKMQQAVPDKELLEAPTAGEGATCRSCAHCPWMAMNGLQAIAEALEQEGSNHEVHVDERLRERALVPLNRMLDFAATLRG.

Iminosuccinate-binding residues include histidine 47 and serine 68. Cysteine 113 contacts [4Fe-4S] cluster. Iminosuccinate contacts are provided by residues 139–141 (YAN) and serine 156. Cysteine 200 is a [4Fe-4S] cluster binding site. Iminosuccinate is bound by residues 226–228 (HPE) and threonine 243. Residue cysteine 297 participates in [4Fe-4S] cluster binding.

Belongs to the quinolinate synthase family. Type 1 subfamily. [4Fe-4S] cluster serves as cofactor.

It localises to the cytoplasm. It catalyses the reaction iminosuccinate + dihydroxyacetone phosphate = quinolinate + phosphate + 2 H2O + H(+). It participates in cofactor biosynthesis; NAD(+) biosynthesis; quinolinate from iminoaspartate: step 1/1. Its function is as follows. Catalyzes the condensation of iminoaspartate with dihydroxyacetone phosphate to form quinolinate. The chain is Quinolinate synthase from Shigella boydii serotype 18 (strain CDC 3083-94 / BS512).